The sequence spans 594 residues: Putative diflavin flavoprotein A 4 (594 aa).

Positions 57–250 are zinc metallo-hydrolase; that stretch reads RRGTTSNSYL…LTLKMIAPGH (194 aa). Residues 279–417 form the Flavodoxin-like domain; that stretch reads VALIYASAYG…VCTTSGANFA (139 aa). The flavodoxin-reductase-like stretch occupies residues 445 to 594; that stretch reads VGRIIGSIGV…IRHRKSGGQY (150 aa).

The protein in the N-terminal section; belongs to the zinc metallo-hydrolase group 3 family. It in the C-terminal section; belongs to the flavodoxin reductase family. Fe cation is required as a cofactor.

In terms of biological role, mediates electron transfer from NADH to oxygen, reducing it to water. This modular protein has 3 redox cofactors, in other organisms the same activity requires 2 or 3 proteins. The sequence is that of Putative diflavin flavoprotein A 4 (dfa4) from Synechocystis sp. (strain ATCC 27184 / PCC 6803 / Kazusa).